The sequence spans 251 residues: Triosephosphate isomerase (251 aa).

Residue 9–11 (NWK) participates in substrate binding. His95 functions as the Electrophile in the catalytic mechanism. Catalysis depends on Glu167, which acts as the Proton acceptor. Substrate-binding positions include Gly173, Ser213, and 234 to 235 (GG).

This sequence belongs to the triosephosphate isomerase family. As to quaternary structure, homodimer.

Its subcellular location is the cytoplasm. It carries out the reaction D-glyceraldehyde 3-phosphate = dihydroxyacetone phosphate. It functions in the pathway carbohydrate biosynthesis; gluconeogenesis. Its pathway is carbohydrate degradation; glycolysis; D-glyceraldehyde 3-phosphate from glycerone phosphate: step 1/1. In terms of biological role, involved in the gluconeogenesis. Catalyzes stereospecifically the conversion of dihydroxyacetone phosphate (DHAP) to D-glyceraldehyde-3-phosphate (G3P). In Carboxydothermus hydrogenoformans (strain ATCC BAA-161 / DSM 6008 / Z-2901), this protein is Triosephosphate isomerase.